The sequence spans 573 residues: Urease subunit alpha 1 (573 aa).

In terms of domain architecture, Urease spans 136 to 573 (GGIDTHVHFI…LPLAQRYFLF (438 aa)). 3 residues coordinate Ni(2+): histidine 141, histidine 143, and lysine 224. Lysine 224 is subject to N6-carboxylysine. Histidine 226 lines the substrate pocket. Ni(2+) is bound by residues histidine 253 and histidine 279. Histidine 327 serves as the catalytic Proton donor. Residue aspartate 367 participates in Ni(2+) binding.

This sequence belongs to the metallo-dependent hydrolases superfamily. Urease alpha subunit family. In terms of assembly, may form a heterohexamer of 3 UreC (alpha) and 3 UreAB (gamma/beta) subunits. May also form a heterotrimer of UreA (gamma), UreB (beta) and UreC (alpha) subunits. Three heterotrimers associate to form the active enzyme. Ni cation is required as a cofactor. In terms of processing, carboxylation allows a single lysine to coordinate two nickel ions.

It localises to the cytoplasm. It catalyses the reaction urea + 2 H2O + H(+) = hydrogencarbonate + 2 NH4(+). Its pathway is nitrogen metabolism; urea degradation; CO(2) and NH(3) from urea (urease route): step 1/1. This is Urease subunit alpha 1 from Streptomyces coelicolor (strain ATCC BAA-471 / A3(2) / M145).